The sequence spans 292 residues: NAD kinase (292 aa).

Asp73 acts as the Proton acceptor in catalysis. Residues 73–74, 147–148, His158, Arg175, Asp177, 188–193, and Gln247 each bind NAD(+); these read DG, NE, and TGYSLS.

It belongs to the NAD kinase family. A divalent metal cation serves as cofactor.

The protein resides in the cytoplasm. The catalysed reaction is NAD(+) + ATP = ADP + NADP(+) + H(+). Functionally, involved in the regulation of the intracellular balance of NAD and NADP, and is a key enzyme in the biosynthesis of NADP. Catalyzes specifically the phosphorylation on 2'-hydroxyl of the adenosine moiety of NAD to yield NADP. The chain is NAD kinase from Buchnera aphidicola subsp. Acyrthosiphon pisum (strain 5A).